Here is a 31-residue protein sequence, read N- to C-terminus: Cytochrome b6-f complex subunit 6 (31 aa).

Residues 4–26 (LTSYFGFLLAALTITSALFIGLS) form a helical membrane-spanning segment.

This sequence belongs to the PetL family. In terms of assembly, the 4 large subunits of the cytochrome b6-f complex are cytochrome b6, subunit IV (17 kDa polypeptide, PetD), cytochrome f and the Rieske protein, while the 4 small subunits are PetG, PetL, PetM and PetN. The complex functions as a dimer.

Its subcellular location is the plastid. It is found in the chloroplast thylakoid membrane. In terms of biological role, component of the cytochrome b6-f complex, which mediates electron transfer between photosystem II (PSII) and photosystem I (PSI), cyclic electron flow around PSI, and state transitions. PetL is important for photoautotrophic growth as well as for electron transfer efficiency and stability of the cytochrome b6-f complex. The sequence is that of Cytochrome b6-f complex subunit 6 from Aethionema cordifolium (Lebanon stonecress).